Reading from the N-terminus, the 840-residue chain is UPF0508 protein SCY_2952 (840 aa).

Belongs to the UPF0508 family.

The sequence is that of UPF0508 protein SCY_2952 from Saccharomyces cerevisiae (strain YJM789) (Baker's yeast).